The chain runs to 273 residues: Type II iodothyronine deiodinase (273 aa).

At 1–9 (MGILSVDLL) the chain is on the lumenal side. The chain crosses the membrane as a helical; Signal-anchor for type III membrane protein span at residues 10-34 (ITLQILPVFFSNCLFLALYDSVILL). The Cytoplasmic segment spans residues 35 to 273 (KHVVLLLSRS…KRUKKTRLAG (239 aa)). Residue Sec-133 is part of the active site. 2 non-standard amino acids (selenocysteine) are found at residues Sec-133 and Sec-266.

Belongs to the iodothyronine deiodinase family. In terms of assembly, predominantly monomer. Can form homodimers but homodimerization is not essential for enzyme activity. Interacts with USP20 and USP33. Interacts with MARCHF6. In terms of processing, ubiquitinated by MARCHF6, leading to its degradation by the proteasome. Deubiquitinated by USP20 and USP33. In terms of tissue distribution, isoform 1 is expressed in the lung, trachea, kidney, heart, skeletal muscle, placenta, fetal brain and several regions of the adult brain. Isoform 2 is expressed in the brain, heart, kidney and trachea.

Its subcellular location is the endoplasmic reticulum membrane. The enzyme catalyses 3,3',5-triiodo-L-thyronine + iodide + A + H(+) = L-thyroxine + AH2. It carries out the reaction 3,3'-diiodo-L-thyronine + iodide + A + H(+) = 3,3',5'-triiodo-L-thyronine + AH2. The catalysed reaction is 3'-iodo-L-thyronine + iodide + A + H(+) = 3',5'-diiodo-L-thyronine + AH2. It catalyses the reaction 3,3'-diiodothyronamine + iodide + A + H(+) = 3,3',5'-triiodothyronamine + AH2. The enzyme catalyses 3'-iodothyronamine + iodide + A + H(+) = 3',5'-diiodothyronamine + AH2. Functionally, plays a crucial role in the metabolism of thyroid hormones (TH) and has specific roles in TH activation and inactivation by deiodination. Catalyzes the deiodination of L-thyroxine (T4) to 3,5,3'-triiodothyronine (T3), 3,3',5'-triiodothyronine (rT3) to 3,3'-diiodothyronine (3,3'-T2) and 3',5'-diiodothyronine (3',5'-T2) to 3'-monoiodothyronine (3'-T1) via outer-ring deiodination (ORD). Catalyzes the phenolic ring deiodinations of 3,3',5'-triiodothyronamine and 3',5'- diiodothyronamine. The polypeptide is Type II iodothyronine deiodinase (DIO2) (Homo sapiens (Human)).